A 193-amino-acid chain; its full sequence is Rho-related GTP-binding protein RhoA-D (193 aa).

GTP-binding positions include 12 to 19 (GDGACGKT), 30 to 37 (FPEVYVPT), 59 to 63 (DTAGQ), 117 to 120 (NKKD), and 160 to 162 (SAK). A glycan ((Microbial infection) O-linked (GlcNAc) tyrosine; by Yersinia Afp18) is linked at Tyr-34. Cys-190 carries the cysteine methyl ester modification. A lipid anchor (S-geranylgeranyl cysteine) is attached at Cys-190. Residues 191–193 (LLL) constitute a propeptide, removed in mature form.

Belongs to the small GTPase superfamily. Rho family. In terms of processing, (Microbial infection) Glycosylated at Tyr-34 by Yersinia ruckeri toxin Afp18. Mono-O-GlcNAcylation by Afp18 inhibits RhoA activation by guanine nucleotide exchange factors and blocks RhoA signaling.

The protein resides in the cell membrane. In terms of biological role, regulates a signal transduction pathway linking plasma membrane receptors to the assembly of focal adhesions and actin stress fibers. The polypeptide is Rho-related GTP-binding protein RhoA-D (Danio rerio (Zebrafish)).